Reading from the N-terminus, the 132-residue chain is Small ribosomal subunit protein uS8 (132 aa).

It belongs to the universal ribosomal protein uS8 family. In terms of assembly, part of the 30S ribosomal subunit. Contacts proteins S5 and S12.

Its function is as follows. One of the primary rRNA binding proteins, it binds directly to 16S rRNA central domain where it helps coordinate assembly of the platform of the 30S subunit. This chain is Small ribosomal subunit protein uS8, found in Bradyrhizobium sp. (strain BTAi1 / ATCC BAA-1182).